The following is a 69-amino-acid chain: Neuropeptide-like protein 30 (69 aa).

Residues 1–22 (MISTSSILILVVLLACFMAASA) form the signal peptide. Tyrosine amide occurs at positions 29, 39, 46, and 53. Tryptophan amide occurs at positions 58 and 67.

The protein belongs to the YARP (YGGW-amide related peptide) family. Expressed in hypoderm.

It is found in the secreted. Functionally, may have antimicrobial activity. May play a role in response to fungal infection. This is Neuropeptide-like protein 30 (nlp-30) from Caenorhabditis elegans.